The chain runs to 154 residues: MPLIPTENKLAIYRYLFQEGVLVAPKDFHLAKHPQIETVSNLDVLQILRSFKSRKFVTETFNWQYYYWVLTEEGIKYLRTYLQVPESVVPATMKKQASRPSTYTRSEETKRTGASGDFDPSFNRGDRRQGGDRRGGMGRGQYRTERSAPAPQQN.

The interval 91–154 (ATMKKQASRP…ERSAPAPQQN (64 aa)) is disordered. The span at 124-135 (RGDRRQGGDRRG) shows a compositional bias: basic and acidic residues.

It belongs to the eukaryotic ribosomal protein eS10 family.

It localises to the cytoplasm. The sequence is that of Small ribosomal subunit protein eS10 (rps10) from Dictyostelium discoideum (Social amoeba).